Here is a 406-residue protein sequence, read N- to C-terminus: MQAWTKPDIPVVPGPARRLRLYDTASGGLVEVPPGPDGPARMYVCGITPYDATHMGHAATYVTFDLVNRLWRDAGYTVHYTQNITDVDDPLLERATATGVEWTDLAEREIQLFRDDMTALRVIPPQEYVGVVESIPLVVERIAELQQAGAVYDVDGDLYFAVKADPAFGGISSYDADTMRTLFGERGGDPDREGKRDPLDCLVWQQERPGEPAWDSPFGRGRPGWHIECSAIALQYLGMTIDVQGGGSDLIFPHHEMSASEAQCATGQHPFARAYVHQAMVGLDGEKMSKSKGNLVLVSRERQAGSDPMAIRLALLAHHYRTDWFWTDSELLDAQERLDVWRGAITRGTGPDGPAAVDALRAALTNDLDTTAALAAIDQWAETNGDDPEASALVALAVDALLGIKL.

A Zn(2+)-binding site is contributed by Cys45. Residues 45-48, Thr60, and 83-85 contribute to the L-cysteinyl-5'-AMP site; these read CGIT and NIT. A 'HIGH' region motif is present at residues 47 to 57; the sequence is ITPYDATHMGH. Positions 185–190 match the 'ERGGDP' region motif; that stretch reads ERGGDP. Trp225 lines the L-cysteinyl-5'-AMP pocket. Cys229 is a binding site for Zn(2+). 247 to 249 contributes to the L-cysteinyl-5'-AMP binding site; it reads GSD. Zn(2+) is bound at residue His254. Position 281 (Val281) interacts with L-cysteinyl-5'-AMP. The 'KMSKS' region signature appears at 287-291; the sequence is KMSKS.

The protein belongs to the class-I aminoacyl-tRNA synthetase family. MshC subfamily. As to quaternary structure, monomer. Requires Zn(2+) as cofactor.

It catalyses the reaction 1D-myo-inositol 2-amino-2-deoxy-alpha-D-glucopyranoside + L-cysteine + ATP = 1D-myo-inositol 2-(L-cysteinylamino)-2-deoxy-alpha-D-glucopyranoside + AMP + diphosphate + H(+). Functionally, catalyzes the ATP-dependent condensation of GlcN-Ins and L-cysteine to form L-Cys-GlcN-Ins. The chain is L-cysteine:1D-myo-inositol 2-amino-2-deoxy-alpha-D-glucopyranoside ligase from Kribbella flavida (strain DSM 17836 / JCM 10339 / NBRC 14399).